A 102-amino-acid polypeptide reads, in one-letter code: Small ribosomal subunit protein uS10 (102 aa).

Belongs to the universal ribosomal protein uS10 family. Part of the 30S ribosomal subunit.

In terms of biological role, involved in the binding of tRNA to the ribosomes. The chain is Small ribosomal subunit protein uS10 from Caulobacter sp. (strain K31).